A 95-amino-acid chain; its full sequence is MSFKFNAEVRSKQGKGASRRLRHNGQIPAIVYGGSEAPVSIVLNHDELNNAQIHDSFYSDTIILVIEGKEISVKVQAMQRHPFKPKLVHIDFKRV.

Residues 1-20 (MSFKFNAEVRSKQGKGASRR) form a disordered region.

This sequence belongs to the bacterial ribosomal protein bL25 family. As to quaternary structure, part of the 50S ribosomal subunit; part of the 5S rRNA/L5/L18/L25 subcomplex. Contacts the 5S rRNA. Binds to the 5S rRNA independently of L5 and L18.

Functionally, this is one of the proteins that binds to the 5S RNA in the ribosome where it forms part of the central protuberance. This Histophilus somni (strain 129Pt) (Haemophilus somnus) protein is Large ribosomal subunit protein bL25.